A 506-amino-acid polypeptide reads, in one-letter code: Galactose/methyl galactoside import ATP-binding protein MglA (506 aa).

ABC transporter domains lie at 14–249 (LTMT…VGRE) and 260–506 (TPKE…AKYL). 46-53 (GENGAGKS) serves as a coordination point for ATP.

It belongs to the ABC transporter superfamily. Galactose/methyl galactoside importer (TC 3.A.1.2.3) family. The complex is composed of one ATP-binding protein (MglA), two transmembrane proteins (MglC) and a solute-binding protein (MglB).

It is found in the cell inner membrane. It carries out the reaction D-galactose(out) + ATP + H2O = D-galactose(in) + ADP + phosphate + H(+). The enzyme catalyses methyl beta-D-galactoside(out) + ATP + H2O = methyl beta-D-galactoside(in) + ADP + phosphate + H(+). Its function is as follows. Part of the ABC transporter complex MglABC involved in galactose/methyl galactoside import. Responsible for energy coupling to the transport system. This Pasteurella multocida (strain Pm70) protein is Galactose/methyl galactoside import ATP-binding protein MglA.